A 783-amino-acid chain; its full sequence is Polyribonucleotide nucleotidyltransferase 1, mitochondrial (783 aa).

Residues 1-46 constitute a mitochondrion transit peptide; sequence MAACRYCCSCLRLRPLSDGPFCLPGRDRALTQLLVRALWSSTGSRA. Residues lysine 250, lysine 264, lysine 285, and lysine 289 each carry the N6-acetyllysine modification. Residue lysine 552 is modified to N6-succinyllysine. Residues 605-664 enclose the KH domain; that stretch reads PVVETVQVPLSKRAKFVGPGGYNLKKLQAETGVTISQVDEETFSVFAPTPSALHEARDFI. Residues 679-750 enclose the S1 motif domain; the sequence is GAVYTATITE…ADGRMRLSRK (72 aa). Phosphoserine is present on residues serine 754 and serine 782.

Belongs to the polyribonucleotide nucleotidyltransferase family. As to quaternary structure, homotrimer; in free form. Homooligomer. Component of the mitochondrial degradosome (mtEXO) complex which is a heteropentamer containing 2 copies of SUPV3L1 and 3 copies of PNPT1. As part of the mitochondrial degradosome complex, interacts with GRSF1 in an RNA-dependent manner; the interaction enhances the activity of the complex. Interacts with TCL1A; the interaction has no effect on PNPT1 exonuclease activity.

It is found in the cytoplasm. Its subcellular location is the mitochondrion matrix. It localises to the mitochondrion intermembrane space. It catalyses the reaction RNA(n+1) + phosphate = RNA(n) + a ribonucleoside 5'-diphosphate. RNA-binding protein implicated in numerous RNA metabolic processes. Catalyzes the phosphorolysis of single-stranded polyribonucleotides processively in the 3'-to-5' direction. Mitochondrial intermembrane factor with RNA-processing exoribonulease activity. Component of the mitochondrial degradosome (mtEXO) complex, that degrades 3' overhang double-stranded RNA with a 3'-to-5' directionality in an ATP-dependent manner. Involved in the degradation of non-coding mitochondrial transcripts (MT-ncRNA) and tRNA-like molecules. Required for correct processing and polyadenylation of mitochondrial mRNAs. Plays a role as a cytoplasmic RNA import factor that mediates the translocation of small RNA components like the 5S RNA, the RNA subunit of ribonuclease P and the mitochondrial RNA-processing (MRP) RNA, into the mitochondrial matrix. Plays a role in mitochondrial morphogenesis and respiration; regulates the expression of the electron transport chain (ETC) components at the mRNA and protein levels. In the cytoplasm, shows a 3'-to-5' exoribonuclease mediating mRNA degradation activity; degrades c-myc mRNA upon treatment with IFNB1/IFN-beta, resulting in a growth arrest in melanoma cells. Regulates the stability of specific mature miRNAs in melanoma cells; specifically and selectively degrades miR-221, preferentially. Also plays a role in RNA cell surveillance by cleaning up oxidized RNAs. Binds to the RNA subunit of ribonuclease P, MRP RNA and miR-221 microRNA. The sequence is that of Polyribonucleotide nucleotidyltransferase 1, mitochondrial (PNPT1) from Pongo abelii (Sumatran orangutan).